We begin with the raw amino-acid sequence, 615 residues long: Homologous recombination OB-fold protein (615 aa).

Disordered stretches follow at residues 42–75, 213–326, and 546–590; these read LRPV…PRLC, PWPS…PVTQ, and DFLE…FPEE. A Phosphoserine modification is found at Ser47. Composition is skewed to polar residues over residues 47 to 71, 232 to 241, and 257 to 275; these read SRPQ…NQSV, SCVSTSQQRG, and IRSS…SPRA. Over residues 302–317 the composition is skewed to low complexity; that stretch reads SSRAPVSSVESPVSTP.

In terms of assembly, interacts with MCM8; this interaction is necessary for MCM8-MCM9 helicase complex recruitment to DNA damage sites. Interacts with RPA1; this interaction associates HROB with the RPA complex.

It localises to the nucleus. The protein resides in the chromosome. Its function is as follows. DNA-binding protein involved in homologous recombination that acts by recruiting the MCM8-MCM9 helicase complex to sites of DNA damage to promote DNA repair synthesis. This is Homologous recombination OB-fold protein from Mus musculus (Mouse).